Reading from the N-terminus, the 505-residue chain is Zinc finger protein 649 (505 aa).

In terms of domain architecture, KRAB spans 8–79 (LTLEDVAVDF…EDEIHSPAHP (72 aa)). Lys112 is covalently cross-linked (Glycyl lysine isopeptide (Lys-Gly) (interchain with G-Cter in SUMO2)). C2H2-type zinc fingers lie at residues 178–200 (HECTDCGKAFLKKSQLTEHKRIH), 206–228 (HVCSLCGKAFYKKYRLTEHERAH), 234–256 (HGCSLCGKAFYKRYRLTEHERAH), 262–284 (YGCSECGKAFPRKSELTEHQRIH), 290–312 (HQCSECGRAFSRKSLLVVHQRTH), 318–340 (HTCSECGKGFIQKGNLNIHQRTH), 346–368 (YGCIDCGKAFSQKSCLVAHQRYH), 374–396 (FVCPECGQPCSQKSGLIRHQKIH), 402–424 (YKCSDCGKAFLTKTMLIVHHRTH), and 430–452 (YGCDECEKAYFYMSCLVKHKRIH). The disordered stretch occupies residues 455–481 (EKRGDSVKVENPSTASHSLSPSEHVQG). Residues 465-477 (NPSTASHSLSPSE) show a composition bias toward polar residues.

The protein belongs to the krueppel C2H2-type zinc-finger protein family. Highly expressed in heart, skeletal muscle, and brain. Lower expression in liver, lung, kidney, pancreas and placenta.

It localises to the nucleus. In terms of biological role, transcriptional repressor. Regulator of transcriptional factor complexes and may suppress SRE and AP-1 transcription activities mediated by growth factor signaling pathways. This Homo sapiens (Human) protein is Zinc finger protein 649 (ZNF649).